Consider the following 445-residue polypeptide: UPF0210 protein Ccon26_06850 (445 aa).

The protein belongs to the UPF0210 family. As to quaternary structure, homodimer.

This is UPF0210 protein Ccon26_06850 from Campylobacter concisus (strain 13826).